Reading from the N-terminus, the 521-residue chain is GMP synthase [glutamine-hydrolyzing] (521 aa).

The region spanning K9–N203 is the Glutamine amidotransferase type-1 domain. C86 (nucleophile) is an active-site residue. Active-site residues include H177 and E179. The region spanning W204–C396 is the GMPS ATP-PPase domain. Residue S231–S237 participates in ATP binding.

Homodimer.

It carries out the reaction XMP + L-glutamine + ATP + H2O = GMP + L-glutamate + AMP + diphosphate + 2 H(+). It participates in purine metabolism; GMP biosynthesis; GMP from XMP (L-Gln route): step 1/1. In terms of biological role, catalyzes the synthesis of GMP from XMP. The protein is GMP synthase [glutamine-hydrolyzing] of Vesicomyosocius okutanii subsp. Calyptogena okutanii (strain HA).